A 380-amino-acid polypeptide reads, in one-letter code: Cytochrome b (380 aa).

4 consecutive transmembrane segments (helical) span residues 34 to 54 (FGSL…FLAM), 78 to 99 (WLLR…YMHI), 114 to 134 (WNIG…GYVL), and 179 to 199 (FFAF…VHLL). Positions 84 and 98 each coordinate heme b. Positions 183 and 197 each coordinate heme b. An a ubiquinone-binding site is contributed by H202. A run of 4 helical transmembrane segments spans residues 227-247 (YKDV…ALFS), 289-309 (LGGV…PFVH), 321-341 (LAQV…WLGG), and 348-368 (YIFL…LFIP).

Belongs to the cytochrome b family. The cytochrome bc1 complex contains 3 respiratory subunits (MT-CYB, CYC1 and UQCRFS1), 2 core proteins (UQCRC1 and UQCRC2) and probably 6 low-molecular weight proteins. The cofactor is heme b.

The protein resides in the mitochondrion inner membrane. Functionally, component of the ubiquinol-cytochrome c reductase complex (complex III or cytochrome b-c1 complex) that is part of the mitochondrial respiratory chain. The b-c1 complex mediates electron transfer from ubiquinol to cytochrome c. Contributes to the generation of a proton gradient across the mitochondrial membrane that is then used for ATP synthesis. This chain is Cytochrome b (MT-CYB), found in Branchiostoma lanceolatum (Common lancelet).